A 403-amino-acid polypeptide reads, in one-letter code: Phosphoglycerate kinase (403 aa).

Substrate is bound by residues 21–23, Arg-36, 59–62, Arg-119, and Arg-159; these read DFN and HLGR. Residues Lys-214, Gly-301, Glu-332, and 359–362 each bind ATP; that span reads GGDS.

It belongs to the phosphoglycerate kinase family. In terms of assembly, monomer.

Its subcellular location is the cytoplasm. The catalysed reaction is (2R)-3-phosphoglycerate + ATP = (2R)-3-phospho-glyceroyl phosphate + ADP. Its pathway is carbohydrate degradation; glycolysis; pyruvate from D-glyceraldehyde 3-phosphate: step 2/5. This Lactobacillus gasseri (strain ATCC 33323 / DSM 20243 / BCRC 14619 / CIP 102991 / JCM 1131 / KCTC 3163 / NCIMB 11718 / NCTC 13722 / AM63) protein is Phosphoglycerate kinase.